Here is a 303-residue protein sequence, read N- to C-terminus: Acetyl-coenzyme A carboxylase carboxyl transferase subunit beta (303 aa).

Residues L25–G294 enclose the CoA carboxyltransferase N-terminal domain.

Belongs to the AccD/PCCB family. Acetyl-CoA carboxylase is a heterohexamer composed of biotin carboxyl carrier protein (AccB), biotin carboxylase (AccC) and two subunits each of ACCase subunit alpha (AccA) and ACCase subunit beta (AccD).

It is found in the cytoplasm. It catalyses the reaction N(6)-carboxybiotinyl-L-lysyl-[protein] + acetyl-CoA = N(6)-biotinyl-L-lysyl-[protein] + malonyl-CoA. It participates in lipid metabolism; malonyl-CoA biosynthesis; malonyl-CoA from acetyl-CoA: step 1/1. Component of the acetyl coenzyme A carboxylase (ACC) complex. Biotin carboxylase (BC) catalyzes the carboxylation of biotin on its carrier protein (BCCP) and then the CO(2) group is transferred by the transcarboxylase to acetyl-CoA to form malonyl-CoA. The protein is Acetyl-coenzyme A carboxylase carboxyl transferase subunit beta of Rhizobium rhizogenes (strain K84 / ATCC BAA-868) (Agrobacterium radiobacter).